A 469-amino-acid chain; its full sequence is Ribulose bisphosphate carboxylase large chain (469 aa).

Lys-5 carries the N6,N6,N6-trimethyllysine modification. Asn-114 and Thr-164 together coordinate substrate. Residue Lys-166 is the Proton acceptor of the active site. Lys-168 is a substrate binding site. The Mg(2+) site is built by Lys-192, Asp-194, and Glu-195. Lys-192 is modified (N6-carboxylysine). The active-site Proton acceptor is His-285. The substrate site is built by Arg-286, His-318, and Ser-370.

It belongs to the RuBisCO large chain family. Type I subfamily. In terms of assembly, heterohexadecamer of 8 large chains and 8 small chains; disulfide-linked. The disulfide link is formed within the large subunit homodimers. It depends on Mg(2+) as a cofactor. Post-translationally, the disulfide bond which can form in the large chain dimeric partners within the hexadecamer appears to be associated with oxidative stress and protein turnover.

Its subcellular location is the plastid. The protein localises to the chloroplast. It catalyses the reaction 2 (2R)-3-phosphoglycerate + 2 H(+) = D-ribulose 1,5-bisphosphate + CO2 + H2O. The catalysed reaction is D-ribulose 1,5-bisphosphate + O2 = 2-phosphoglycolate + (2R)-3-phosphoglycerate + 2 H(+). RuBisCO catalyzes two reactions: the carboxylation of D-ribulose 1,5-bisphosphate, the primary event in carbon dioxide fixation, as well as the oxidative fragmentation of the pentose substrate in the photorespiration process. Both reactions occur simultaneously and in competition at the same active site. The sequence is that of Ribulose bisphosphate carboxylase large chain from Fleroya rubrostipulata (Mitragyna rubrostipulata).